A 288-amino-acid chain; its full sequence is Small ribosomal subunit protein uS2 (288 aa).

Positions 255 to 288 (ANNRDHKNNKNNSTIDNAENLKEENLVGGSNNES) are disordered.

This sequence belongs to the universal ribosomal protein uS2 family.

In Ehrlichia chaffeensis (strain ATCC CRL-10679 / Arkansas), this protein is Small ribosomal subunit protein uS2.